A 336-amino-acid polypeptide reads, in one-letter code: Heat-inducible transcription repressor HrcA (336 aa).

Belongs to the HrcA family.

In terms of biological role, negative regulator of class I heat shock genes (grpE-dnaK-dnaJ and groELS operons). Prevents heat-shock induction of these operons. This Variovorax paradoxus (strain S110) protein is Heat-inducible transcription repressor HrcA.